A 986-amino-acid polypeptide reads, in one-letter code: Vacuolar membrane protease (986 aa).

The Cytoplasmic portion of the chain corresponds to 1–16 (MAPLRLSRANPLAFAR). A helical membrane pass occupies residues 17-37 (WPVTLITAVVYLAFLIPLLIV). Topologically, residues 38-392 (HHVVPSPPTA…TTFVLFELHT (355 aa)) are vacuolar. The N-linked (GlcNAc...) asparagine glycan is linked to N121. Residues H176 and D188 each coordinate Zn(2+). E222 functions as the Proton acceptor in the catalytic mechanism. The Zn(2+) site is built by E223, E248, and H321. The helical transmembrane segment at 393–413 (LFALSVTLLVVAPLALLVTGI) threads the bilayer. The Cytoplasmic segment spans residues 414–444 (ALTRADKMYLFRTSAKADESLDSVPLQGLRG). Residues 445–465 (FFRFPFLFAIPTAVTVGLAYL) traverse the membrane as a helical segment. The Vacuolar segment spans residues 466–475 (VTKVNPLIIH). A helical transmembrane segment spans residues 476-496 (SSEYAVWSMMLSAWTFLAWFV). Topologically, residues 497 to 510 (SRMADFARPTALHR) are cytoplasmic. Residues 511 to 531 (IYTLTWMFVLAWVLLVISTVY) traverse the membrane as a helical segment. Topologically, residues 532-535 (QNQR) are vacuolar. A helical membrane pass occupies residues 536–556 (GLAGSYSVFFFFSGTFLATWI). The Cytoplasmic segment spans residues 557-668 (SYLELFSLPR…SASLPTWTWT (112 aa)). The span at 573-585 (QNRPTSRRASSYG) shows a compositional bias: polar residues. The tract at residues 573–622 (QNRPTSRRASSYGGSRLGTASGEDHEEDDHDAEEEEEEQEPTESTSLLGG) is disordered. Acidic residues predominate over residues 596–613 (DHEEDDHDAEEEEEEQEP). The chain crosses the membrane as a helical span at residues 669–689 (LQFLLMAPLVLIMVGPLALLL). Residues 690–704 (TSALHQTGQDGSSSL) are Vacuolar-facing. A helical transmembrane segment spans residues 705-725 (FIYVAIAALTTFLLTPLLPFI). The Cytoplasmic segment spans residues 726-732 (HRHTYHL). The helical transmembrane segment at 733-753 (PVFLLLVFLGTLIYNLVAFPF) threads the bilayer. At 754 to 986 (SPTNRLKLFF…LVEGWKGFSI (233 aa)) the chain is on the vacuolar side. N-linked (GlcNAc...) asparagine glycosylation is found at N799, N840, and N948. A disordered region spans residues 840-859 (NTTDDKEGDEDTHHPRKARI).

It belongs to the peptidase M28 family. Zn(2+) serves as cofactor.

It is found in the vacuole membrane. Its function is as follows. May be involved in vacuolar sorting and osmoregulation. In Aspergillus niger (strain ATCC MYA-4892 / CBS 513.88 / FGSC A1513), this protein is Vacuolar membrane protease.